The following is a 61-amino-acid chain: Small ribosomal subunit protein uS14 (61 aa).

Zn(2+)-binding residues include Cys24, Cys27, Cys40, and Cys43.

The protein belongs to the universal ribosomal protein uS14 family. Zinc-binding uS14 subfamily. As to quaternary structure, part of the 30S ribosomal subunit. Contacts proteins S3 and S10. Zn(2+) serves as cofactor.

Its function is as follows. Binds 16S rRNA, required for the assembly of 30S particles and may also be responsible for determining the conformation of the 16S rRNA at the A site. This is Small ribosomal subunit protein uS14 from Deinococcus geothermalis (strain DSM 11300 / CIP 105573 / AG-3a).